We begin with the raw amino-acid sequence, 387 residues long: 3-hydroxy-D-aspartate aldolase (387 aa).

N6-(pyridoxal phosphate)lysine is present on Lys-62. Gln-85 serves as a coordination point for pyridoxal 5'-phosphate. Residues 199 to 228 (HGQLRGPQGQAGRRHCPGERGRGRAGGRGL) form a disordered region. Residues Thr-238, 256 to 257 (GS), and Tyr-265 each bind pyridoxal 5'-phosphate. His-355 and Asp-357 together coordinate Mg(2+).

Belongs to the DSD1 family. In terms of assembly, homodimer. It depends on pyridoxal 5'-phosphate as a cofactor. Mn(2+) is required as a cofactor. The cofactor is Mg(2+). Requires Co(2+) as cofactor.

It carries out the reaction (3S)-3-hydroxy-D-aspartate = glyoxylate + glycine. It catalyses the reaction (3R)-3-hydroxy-D-aspartate = glyoxylate + glycine. Catalyzes the condensation of glyoxylate and glycine into (2R,3S)-beta-hydroxyaspartate ((3S)-3-hydroxy-D-aspartate). Functions in glyoxylate assimilation via the beta-hydroxyaspartate cycle (BHAC). In vitro catalyzes the cleavage of both D-erythro- and D-threo-3-hydroxyaspartate to glycine and glyoxylate. Also acts on D-threonine, D-3-phenylserine and D-3-3,4-methylenedioxyphenylserine. The sequence is that of 3-hydroxy-D-aspartate aldolase (dhaa) from Paracoccus denitrificans.